The chain runs to 205 residues: Histidine biosynthesis bifunctional protein HisIE (205 aa).

A phosphoribosyl-AMP cyclohydrolase region spans residues 1 to 115 (MIDIKELKFD…DEETEDGIEI (115 aa)). The interval 116 to 205 (LNKLYERIKG…YNELERRYKK (90 aa)) is phosphoribosyl-ATP pyrophosphohydrolase.

In the N-terminal section; belongs to the PRA-CH family. This sequence in the C-terminal section; belongs to the PRA-PH family.

It localises to the cytoplasm. The catalysed reaction is 1-(5-phospho-beta-D-ribosyl)-ATP + H2O = 1-(5-phospho-beta-D-ribosyl)-5'-AMP + diphosphate + H(+). The enzyme catalyses 1-(5-phospho-beta-D-ribosyl)-5'-AMP + H2O = 1-(5-phospho-beta-D-ribosyl)-5-[(5-phospho-beta-D-ribosylamino)methylideneamino]imidazole-4-carboxamide. It functions in the pathway amino-acid biosynthesis; L-histidine biosynthesis; L-histidine from 5-phospho-alpha-D-ribose 1-diphosphate: step 2/9. Its pathway is amino-acid biosynthesis; L-histidine biosynthesis; L-histidine from 5-phospho-alpha-D-ribose 1-diphosphate: step 3/9. The sequence is that of Histidine biosynthesis bifunctional protein HisIE from Caldanaerobacter subterraneus subsp. tengcongensis (strain DSM 15242 / JCM 11007 / NBRC 100824 / MB4) (Thermoanaerobacter tengcongensis).